The primary structure comprises 119 residues: Protein TusC (119 aa).

It belongs to the DsrF/TusC family. As to quaternary structure, heterohexamer, formed by a dimer of trimers. The hexameric TusBCD complex contains 2 copies each of TusB, TusC and TusD. The TusBCD complex interacts with TusE.

The protein localises to the cytoplasm. Its function is as follows. Part of a sulfur-relay system required for 2-thiolation of 5-methylaminomethyl-2-thiouridine (mnm(5)s(2)U) at tRNA wobble positions. In Escherichia fergusonii (strain ATCC 35469 / DSM 13698 / CCUG 18766 / IAM 14443 / JCM 21226 / LMG 7866 / NBRC 102419 / NCTC 12128 / CDC 0568-73), this protein is Protein TusC.